The following is a 180-amino-acid chain: Mitochondrial inner membrane protease subunit 2 (180 aa).

A helical membrane pass occupies residues 19–39; the sequence is LVGITLWVPVLMFVEQHVVSV. Catalysis depends on residues S46 and K92.

This sequence belongs to the peptidase S26 family. IMP2 subfamily. As to quaternary structure, heterodimer of 2 subunits, imp1 and imp2.

The protein localises to the mitochondrion inner membrane. In terms of biological role, catalyzes the removal of transit peptides required for the targeting of proteins from the mitochondrial matrix, across the inner membrane, into the inter-membrane space. The protein is Mitochondrial inner membrane protease subunit 2 of Schizosaccharomyces pombe (strain 972 / ATCC 24843) (Fission yeast).